Reading from the N-terminus, the 29-residue chain is Dermaseptin-9TR (29 aa).

In terms of tissue distribution, expressed by the skin glands.

It is found in the secreted. Functionally, has antimicrobial activity. The polypeptide is Dermaseptin-9TR (Phyllomedusa trinitatis (Trinidad leaf frog)).